The following is a 341-amino-acid chain: Serpentine receptor class beta-1 (341 aa).

7 helical membrane passes run 22-42 (AQFW…IFLL), 66-86 (FLFA…PLFI), 102-122 (GQLS…GFSI), 141-161 (LGPL…FTVF), 188-208 (CWIL…ILLV), 240-260 (LIVS…TIFI), and 279-299 (GVYI…IKAL).

Belongs to the nematode receptor-like protein srb family.

It localises to the membrane. The chain is Serpentine receptor class beta-1 (srb-1) from Caenorhabditis elegans.